We begin with the raw amino-acid sequence, 541 residues long: Nuclear receptor subfamily 5 group A member 2 (541 aa).

Positions 1–10 (MSSNSDTGDL) are enriched in polar residues. Residues 1 to 35 (MSSNSDTGDLQESLKHGLTPIGAGLPDRHGSPIPA) form a disordered region. The nuclear receptor DNA-binding region spans 83–154 (EELCPVCGDK…KCLSVGMKLE (72 aa)). 8 residues coordinate Zn(2+): C86, C89, C103, C106, C122, C128, C138, and C141. 2 consecutive NR C4-type zinc fingers follow at residues 86-106 (CPVC…CESC) and 122-146 (CIEN…FQKC). The C-terminal extension (CTE) stretch occupies residues 152–167 (KLEAVRADRMRGGRNK). Positions 168-187 (FGPMYKRDRALKQQKKALIR) match the FTZ-F1 box motif. K270 participates in a covalent cross-link: Glycyl lysine isopeptide (Lys-Gly) (interchain with G-Cter in SUMO1). The NR LBD domain occupies 300–539 (SIPHLILELL…NLLIEMLHAK (240 aa)). A phospholipid derivative is bound by residues 421-424 (GATL), Y516, and K520. The AF-2 stretch occupies residues 528 to 539 (YNNLLIEMLHAK).

Belongs to the nuclear hormone receptor family. NR5 subfamily. As to quaternary structure, monomer; Binds DNA as a monomer. Interacts with nuclear receptor corepressors NR0B1 and NR0B2; repressing NR5A2 nuclear receptor activity. Interacts with nuclear receptor coactivators CTNNB1, PPARGC1A and NCOA2; interaction takes place following ligand-binding and promotes target gene activation. Interacts (when sumoylated) with GPS2; interaction with GPS2 onto hepatic acute phase protein promoters prevents N-Cor corepressor complex dissociation. Interacts with HNF1A. Interacts with GRIP1. In terms of processing, sumoylated by SUMO1 at Lys-270 during the hepatic acute phase response, leading to promote interaction with GPS2 and prevent N-Cor corepressor complex dissociation. Abundantly expressed in pancreas, less in liver, very low levels in heart and lung. Expressed in the Hep-G2 cell line. Isoform 1 and isoform 2 seem to be present in fetal and adult liver and Hep-G2 cells.

It localises to the nucleus. The protein resides in the chromosome. Its activity is regulated as follows. Activated by synthetic agonists RR-RJW100, SR-RJW100, endo sulfamide compound 6N and GSK8470. In terms of biological role, orphan nuclear receptor that binds DNA as a monomer to the 5'-TCAAGGCCA-3' sequence and controls expression of target genes: regulates key biological processes, such as early embryonic development, cholesterol and bile acid synthesis pathways, as well as liver and pancreas morphogenesis. Ligand-binding causes conformational change which causes recruitment of coactivators, promoting target gene activation. The specific ligand is unknown, but specific phospholipids, such as phosphatidylethanolamine, phosphatidylserine, dilauroyl phosphatidylcholine and diundecanoyl phosphatidylcholine can act as ligand in vitro. Acts as a pioneer transcription factor, which unwraps target DNA from histones and elicits local opening of closed chromatin. Plays a central role during preimplantation stages of embryonic development. Plays a minor role in zygotic genome activation (ZGA) by regulating a small set of two-cell stage genes. Plays a major role in morula development (2-16 cells embryos) by acting as a master regulator at the 8-cell stage, controlling expression of lineage-specifying transcription factors and genes involved in mitosis, telomere maintenance and DNA repair. Zygotic NR5A2 binds to both closed and open chromatin with other transcription factors, often at SINE B1/Alu repeats DNA elements, promoting chromatin accessibility at nearby regulatory regions. Also involved in the epiblast stage of development and embryonic stem cell pluripotency, by promoting expression of POU5F1/OCT4. Regulates other processes later in development, such as formation of connective tissue in lower jaw and middle ear, neural stem cell differentiation, ovarian follicle development and Sertoli cell differentiation. Involved in exocrine pancreas development and acinar cell differentiation. Acts as an essential transcriptional regulator of lipid metabolism. Key regulator of cholesterol 7-alpha-hydroxylase gene (CYP7A) expression in liver. Also acts as a negative regulator of inflammation in different organs, such as, liver and pancreas. Protects against intestinal inflammation via its ability to regulate glucocorticoid production. Plays an anti-inflammatory role during the hepatic acute phase response by acting as a corepressor: inhibits the hepatic acute phase response by preventing dissociation of the N-Cor corepressor complex. Acts as a regulator of immunity by promoting lymphocyte T-cell development, proliferation and effector functions. Also involved in resolution of endoplasmic reticulum stress in the liver. In constrast to isoform 1 and isoform 2, does not induce cholesterol 7-alpha-hydroxylase gene (CYP7A) promoter activity. Functionally, (Microbial infection) Plays a crucial role for hepatitis B virus gene transcription and DNA replication. Mechanistically, synergistically cooperates with HNF1A to up-regulate the activity of one of the critical cis-elements in the hepatitis B virus genome enhancer II (ENII). The sequence is that of Nuclear receptor subfamily 5 group A member 2 from Homo sapiens (Human).